The following is a 278-amino-acid chain: Putative cysteine-rich repeat secretory protein 19 (278 aa).

The first 32 residues, 1-32, serve as a signal peptide directing secretion; sequence MYSSSSVSKRFVLVPIVVVVTTQLLLVRNVSS. 2 consecutive Gnk2-homologous domains span residues 39–147 and 160–267; these read YLHH…SLDT and PSAK…LYPF.

Belongs to the cysteine-rich repeat secretory protein family.

The protein resides in the secreted. This is Putative cysteine-rich repeat secretory protein 19 (CRRSP19) from Arabidopsis thaliana (Mouse-ear cress).